We begin with the raw amino-acid sequence, 497 residues long: Glycerol kinase (497 aa).

Threonine 12 contributes to the ADP binding site. Threonine 12, threonine 13, and serine 14 together coordinate ATP. Sn-glycerol 3-phosphate is bound at residue threonine 12. Position 16 (arginine 16) interacts with ADP. Sn-glycerol 3-phosphate contacts are provided by arginine 82, glutamate 83, tyrosine 134, and aspartate 243. Positions 82, 83, 134, 243, and 244 each coordinate glycerol. ADP contacts are provided by threonine 265 and glycine 308. Threonine 265, glycine 308, glutamine 312, and glycine 409 together coordinate ATP. ADP is bound by residues glycine 409 and asparagine 413.

The protein belongs to the FGGY kinase family. As to quaternary structure, homotetramer and homodimer (in equilibrium).

The catalysed reaction is glycerol + ATP = sn-glycerol 3-phosphate + ADP + H(+). It participates in polyol metabolism; glycerol degradation via glycerol kinase pathway; sn-glycerol 3-phosphate from glycerol: step 1/1. Activated by phosphorylation and inhibited by fructose 1,6-bisphosphate (FBP). Key enzyme in the regulation of glycerol uptake and metabolism. Catalyzes the phosphorylation of glycerol to yield sn-glycerol 3-phosphate. The protein is Glycerol kinase of Thermoanaerobacter pseudethanolicus (strain ATCC 33223 / 39E) (Clostridium thermohydrosulfuricum).